The sequence spans 219 residues: Ras-related protein Rab-3D (219 aa).

Alanine 2 is subject to N-acetylalanine. Residue glycine 29–serine 37 participates in GDP binding. Positions 31, 32, 33, 34, 35, 36, 37, 49, and 53 each coordinate GTP. Residue threonine 36 participates in Mg(2+) binding. Residues proline 49–aspartate 58 carry the Switch 1 motif. Residues threonine 54 and aspartate 77 each contribute to the Mg(2+) site. Residue glycine 80 participates in GTP binding. Residues glycine 80 to methionine 96 carry the Switch 2 motif. Threonine 86 bears the Phosphothreonine; by LRRK2 mark. 5 residues coordinate GTP: asparagine 135, lysine 136, aspartate 138, alanine 166, and lysine 167. Residues asparagine 135–aspartate 138 and serine 165–lysine 167 contribute to the GDP site. Phosphoserine is present on serine 190. Residues serine 190 to cysteine 219 are disordered. Low complexity predominate over residues proline 193–glycine 203. Over residues threonine 209–cysteine 219 the composition is skewed to pro residues. 2 S-geranylgeranyl cysteine lipidation sites follow: cysteine 217 and cysteine 219. Cysteine 219 carries the cysteine methyl ester modification.

The protein belongs to the small GTPase superfamily. Rab family. Interacts with RIMS1, RIMS2, RPH3A, RPH3AL and RAB3IP. The GTP-bound form interacts with REP15. Interacts with CHM and CHML; phosphorylation at Thr-86 disrupts these interactions. Interacts with MADD (via uDENN domain); the GTP-bound form is preferred for interaction. The cofactor is Mg(2+). Phosphorylation of Thr-86 in the switch II region by LRRK2 prevents the association of RAB regulatory proteins, including CHM and CHML. Predominantly expressed in the adipocyte tissue, but is also expressed in several other organs including skin, spleen, heart and lung.

The protein resides in the cell membrane. It catalyses the reaction GTP + H2O = GDP + phosphate + H(+). With respect to regulation, regulated by guanine nucleotide exchange factors (GEFs) which promote the exchange of bound GDP for free GTP. Regulated by GTPase activating proteins (GAPs) which increase the GTP hydrolysis activity. Inhibited by GDP dissociation inhibitors (GDIs) which prevent Rab-GDP dissociation. Functionally, the small GTPases Rab are key regulators of intracellular membrane trafficking, from the formation of transport vesicles to their fusion with membranes. Rabs cycle between an inactive GDP-bound form and an active GTP-bound form that is able to recruit to membranes different sets of downstream effectors directly responsible for vesicle formation, movement, tethering and fusion. RAB3D may be involved in the insulin-induced exocytosis of GLUT4-containing vesicles in adipocytes. This chain is Ras-related protein Rab-3D, found in Mus musculus (Mouse).